Consider the following 74-residue polypeptide: uncharacterized protein (74 aa).

Composition is skewed to basic and acidic residues over residues 1 to 13 (MKKQKSIDKHQLK) and 20 to 60 (IKAK…KSFE). The segment at 1–74 (MKKQKSIDKH…ESQMDWHQYK (74 aa)) is disordered. A compositionally biased stretch (polar residues) spans 64–74 (NESQMDWHQYK).

This is an uncharacterized protein from Bacillus subtilis (strain 168).